Consider the following 1290-residue polypeptide: Sorbin and SH3 domain-containing protein 1 (1290 aa).

3 disordered regions span residues 1-211 (MSSE…LSDV), 238-271 (HKLNRDDDSDVHSPRYSFSDDTKSPLSVPRSKSE), and 286-313 (TLPLPARSSSLKSSPERNDWEPLDKKVD). Residues 45–61 (SSSYRGTPSSSPVSPQE) show a composition bias toward low complexity. The residue at position 51 (T51) is a Phosphothreonine. A phosphoserine mark is found at S55, S58, and S62. Positions 62–71 (SPKHESKSGL) are enriched in basic and acidic residues. Composition is skewed to polar residues over residues 83–95 (LSSSADTNGNAQP) and 123–153 (EVSSSHIETDSQDFPPTSRPSSAYPSTTIVN). Positions 161 to 173 (HNRDPASERRAGE) are enriched in basic and acidic residues. Phosphoserine is present on residues D164 and D175. T179 carries the post-translational modification Phosphothreonine. S185, A194, S204, S209, S254, S261, S270, and P288 each carry phosphoserine. The segment covering 189–199 (ASERRAKDASR) has biased composition (basic and acidic residues). The SoHo domain maps to 202–247 (VRSAQDLSDVSTDEVGIPLRNTERSKDWYKTMFKQIHKLNRDDDSD). Over residues 240 to 260 (LNRDDDSDVHSPRYSFSDDTK) the composition is skewed to basic and acidic residues. The span at 299-313 (SPERNDWEPLDKKVD) shows a compositional bias: basic and acidic residues. Y325 carries the phosphotyrosine; by ABL1 modification. S345, P346, Y357, S376, and S407 each carry phosphoserine. The tract at residues 389-416 (VETVNKSPSANSPQSSAVSPTPDITSEP) is disordered. The span at 392 to 412 (VNKSPSANSPQSSAVSPTPDI) shows a compositional bias: polar residues. Y421 is modified (phosphotyrosine; by ABL1). A phosphoserine mark is found at S432 and S470. Disordered regions lie at residues 463 to 482 (LSGLKRPSSSASTKVDRKGG), 588 to 607 (YDSKSSSTMSLQEYGTSSRR), 697 to 739 (SLDF…EMDG), 783 to 803 (VSNDSREGSGGSVHGDFPKHR), 822 to 841 (RKHEQQSSRQSDWRSDSRGD), and 862 to 972 (PLQQ…SPRH). T475 is modified (phosphothreonine). 2 stretches are compositionally biased toward polar residues: residues 595–606 (TMSLQEYGTSSR) and 704–722 (LSKSPTPVLSRSGLTSARS). Phosphoserine is present on S969. SH3 domains follow at residues 1049–1108 (LEMR…LLPP) and 1123–1184 (LEYG…VLKR). Residue T1189 is modified to Phosphothreonine. Y1193 and Y1198 each carry phosphotyrosine. Residues 1198–1210 (YSSSPSRSATVSP) show a composition bias toward low complexity. The tract at residues 1198–1227 (YSSSPSRSATVSPQQPQAQQRRVTPDRSQP) is disordered. 2 positions are modified to phosphoserine: S1201 and S1209. The segment covering 1211–1227 (QQPQAQQRRVTPDRSQP) has biased composition (polar residues). In terms of domain architecture, SH3 3 spans 1229 to 1290 (LDLCSYQALY…PGNYVKPLYL (62 aa)). Y1238 carries the phosphotyrosine; by ABL1 modification.

As to quaternary structure, interacts (via SH3 domain 2) with PXN. Interacts with the long isoform of AFDN and with VCL. AFDN and VCL bind to SORBS1 in a competitive manner and do not form a ternary complex. Interacts with ABL1, CBL, CBLB and INPPL1/SHIP2 through the third SH3 domain. Interaction with ABL1 occurs only after insulin stimulation while this has no effect on the interaction with INPPL1. Interacts with the insulin receptor but dissociates from it following insulin stimulation. Also interacts with SCA7, PTK2/FAK1 and flotillin. Interacts (via third SH3 domain) with the Ten-1 ICD form of TENM1; the interaction induces the translocation of SORBS1 to the nucleus. Interacts with INSM1. Post-translationally, O-glycosylated. In terms of tissue distribution, expressed in all tissues tested: heart, brain, spleen, lung, liver, muscle, kidney and testis. Expressed in 3T3-L1 adipocytes but not in 3T3-L1 fibroblasts.

The protein resides in the cell junction. It is found in the adherens junction. It localises to the cell membrane. Its subcellular location is the cytoplasm. The protein localises to the cytoskeleton. The protein resides in the focal adhesion. It is found in the nucleus. It localises to the nucleus matrix. Plays a role in tyrosine phosphorylation of CBL by linking CBL to the insulin receptor. Required for insulin-stimulated glucose transport. Involved in formation of actin stress fibers and focal adhesions. This Mus musculus (Mouse) protein is Sorbin and SH3 domain-containing protein 1.